The chain runs to 465 residues: NADH-quinone oxidoreductase subunit N (465 aa).

Transmembrane regions (helical) follow at residues 9-29, 44-64, 73-93, 110-130, 159-179, 198-218, 235-255, 265-285, 292-312, 327-347, 371-391, 405-427, and 444-464; these read FNFV…VLLL, ASII…GFVL, LFVS…FSML, FLFM…IVIF, YFTL…FVYL, PILL…LSIA, FIAF…LRIF, EYIV…VALI, MLAY…VSSM, IFAL…IFLI, IMLA…IFWG, YALV…KILI, and VKQK…VFLL.

This sequence belongs to the complex I subunit 2 family. NDH-1 is composed of 14 different subunits. Subunits NuoA, H, J, K, L, M, N constitute the membrane sector of the complex.

The protein localises to the cell inner membrane. The enzyme catalyses a quinone + NADH + 5 H(+)(in) = a quinol + NAD(+) + 4 H(+)(out). NDH-1 shuttles electrons from NADH, via FMN and iron-sulfur (Fe-S) centers, to quinones in the respiratory chain. The immediate electron acceptor for the enzyme in this species is believed to be ubiquinone. Couples the redox reaction to proton translocation (for every two electrons transferred, four hydrogen ions are translocated across the cytoplasmic membrane), and thus conserves the redox energy in a proton gradient. The protein is NADH-quinone oxidoreductase subunit N of Campylobacter lari (strain RM2100 / D67 / ATCC BAA-1060).